We begin with the raw amino-acid sequence, 77 residues long: Tautomerase PptA (77 aa).

The active-site Proton acceptor; via imino nitrogen is the Pro-2.

It belongs to the 4-oxalocrotonate tautomerase family. PptA subfamily. In terms of assembly, homodimer.

The protein resides in the cytoplasm. This is Tautomerase PptA from Escherichia coli (strain K12 / MC4100 / BW2952).